We begin with the raw amino-acid sequence, 342 residues long: Phosphate acyltransferase (342 aa).

It belongs to the PlsX family. In terms of assembly, homodimer. Probably interacts with PlsY.

Its subcellular location is the cytoplasm. It carries out the reaction a fatty acyl-[ACP] + phosphate = an acyl phosphate + holo-[ACP]. It functions in the pathway lipid metabolism; phospholipid metabolism. Catalyzes the reversible formation of acyl-phosphate (acyl-PO(4)) from acyl-[acyl-carrier-protein] (acyl-ACP). This enzyme utilizes acyl-ACP as fatty acyl donor, but not acyl-CoA. The protein is Phosphate acyltransferase of Shewanella putrefaciens (strain CN-32 / ATCC BAA-453).